Here is a 221-residue protein sequence, read N- to C-terminus: Deoxyribose-phosphate aldolase (221 aa).

Asp90 functions as the Proton donor/acceptor in the catalytic mechanism. Lys152 acts as the Schiff-base intermediate with acetaldehyde in catalysis. Residue Lys181 is the Proton donor/acceptor of the active site.

Belongs to the DeoC/FbaB aldolase family. DeoC type 1 subfamily.

Its subcellular location is the cytoplasm. It carries out the reaction 2-deoxy-D-ribose 5-phosphate = D-glyceraldehyde 3-phosphate + acetaldehyde. Its pathway is carbohydrate degradation; 2-deoxy-D-ribose 1-phosphate degradation; D-glyceraldehyde 3-phosphate and acetaldehyde from 2-deoxy-alpha-D-ribose 1-phosphate: step 2/2. In terms of biological role, catalyzes a reversible aldol reaction between acetaldehyde and D-glyceraldehyde 3-phosphate to generate 2-deoxy-D-ribose 5-phosphate. The polypeptide is Deoxyribose-phosphate aldolase (Exiguobacterium sp. (strain ATCC BAA-1283 / AT1b)).